Consider the following 704-residue polypeptide: ATP-dependent zinc metalloprotease FtsH (704 aa).

The Cytoplasmic segment spans residues 1–17 (MADSAKTPRGKKRRPFT). The chain crosses the membrane as a helical span at residues 18-38 (GLALWIIVALLLGMAMFSLFG). Residues 39–127 (RDGYQQIDTQ…DEIASSSWWS (89 aa)) are Extracellular-facing. The helical transmembrane segment at 128 to 148 (TLLLSFLPLLIFIGLFWFLIM) threads the bilayer. Over 149 to 704 (NAQGGGKAMQ…GSAGTDGTGR (556 aa)) the chain is Cytoplasmic. An ATP-binding site is contributed by 217–224 (GPPGTGKT). His-439 is a binding site for Zn(2+). The active site involves Glu-440. The Zn(2+) site is built by His-443 and Asp-515. Residues 624–704 (PREVWISSTE…GSAGTDGTGR (81 aa)) form a disordered region. A compositionally biased stretch (gly residues) spans 681–704 (PHGGEPGGGGYGYDGSAGTDGTGR).

The protein in the central section; belongs to the AAA ATPase family. This sequence in the C-terminal section; belongs to the peptidase M41 family. As to quaternary structure, homohexamer. Zn(2+) is required as a cofactor.

The protein resides in the cell membrane. Functionally, acts as a processive, ATP-dependent zinc metallopeptidase for both cytoplasmic and membrane proteins. Plays a role in the quality control of integral membrane proteins. This Brachybacterium faecium (strain ATCC 43885 / DSM 4810 / JCM 11609 / LMG 19847 / NBRC 14762 / NCIMB 9860 / 6-10) protein is ATP-dependent zinc metalloprotease FtsH.